The following is a 940-amino-acid chain: Gamma-aminobutyric acid type B receptor subunit 2 (940 aa).

The N-terminal stretch at 1–40 (MASPPSSGQPRPPPPPPPPARLLLPLLLSLLLSLAPGAWG) is a signal peptide. Residues 41-482 (WARGAPRPPP…LRKISLPLYS (442 aa)) lie on the Extracellular side of the membrane. Asparagine 89 carries N-linked (GlcNAc...) asparagine glycosylation. 3 disulfides stabilise this stretch: cysteine 107-cysteine 134, cysteine 236-cysteine 265, and cysteine 264-cysteine 301. N-linked (GlcNAc...) asparagine glycosylation is found at asparagine 297, asparagine 388, asparagine 403, and asparagine 452. Residues 483 to 503 (ILSALTILGMIMASAFLFFNI) form a helical membrane-spanning segment. The Cytoplasmic portion of the chain corresponds to 504–521 (KNRNQKLIKMSSPYMNNL). Residues 522–542 (IILGGMLSYASIFLFGLDGSF) traverse the membrane as a helical segment. Over 543 to 550 (VSEKTFET) the chain is Extracellular. Residues 551–571 (LCTVRTWILTVGYTTAFGAMF) traverse the membrane as a helical segment. The Cytoplasmic portion of the chain corresponds to 572–596 (AKTWRVHAIFKNVKMKKKIIKDQKL). Residues 597-617 (LVIVGGMLLIDLCILICWQAV) traverse the membrane as a helical segment. At 618–653 (DPLRRTVERYSMEPDPAGRDISIRPLLEHCENTHMT) the chain is on the extracellular side. A helical transmembrane segment spans residues 654–674 (IWLGIVYAYKGLLMLFGCFLA). Residues 675–690 (WETRNVSIPALNDSKY) are Cytoplasmic-facing. The helical transmembrane segment at 691–711 (IGMSVYNVGIMCIIGAAVSFL) threads the bilayer. Topologically, residues 712 to 719 (TRDQPNVQ) are extracellular. The helical transmembrane segment at 720 to 740 (FCIVALVIIFCSTITLCLVFV) threads the bilayer. Over 741-940 (PKLITLRTNP…PSFRVMVSGL (200 aa)) the chain is Cytoplasmic. The tract at residues 762–789 (TQNQKKEDSKTSTSVTSVNQASTSRLEG) is disordered. Residues 772–786 (TSTSVTSVNQASTSR) show a composition bias toward polar residues. Phosphoserine is present on residues serine 775 and serine 778. Residues 781–818 (QASTSRLEGLQSENHRLRMKITELDKDLEEVTMQLQDT) are a coiled coil. At threonine 818 the chain carries Phosphothreonine. Serine 883, serine 892, serine 912, serine 915, serine 919, and serine 923 each carry phosphoserine.

The protein belongs to the G-protein coupled receptor 3 family. GABA-B receptor subfamily. Heterodimer of GABBR1 and GABBR2. Homodimers may form, but are inactive. Interacts (via C-terminus) with ATF4 (via leucine zipper domain).

It localises to the cell membrane. Its subcellular location is the postsynaptic cell membrane. Component of a heterodimeric G-protein coupled receptor for GABA, formed by GABBR1 and GABBR2. Within the heterodimeric GABA receptor, only GABBR1 seems to bind agonists, while GABBR2 mediates coupling to G proteins. Ligand binding causes a conformation change that triggers signaling via guanine nucleotide-binding proteins (G proteins) and modulates the activity of down-stream effectors, such as adenylate cyclase. Signaling inhibits adenylate cyclase, stimulates phospholipase A2, activates potassium channels, inactivates voltage-dependent calcium-channels and modulates inositol phospholipid hydrolysis. Plays a critical role in the fine-tuning of inhibitory synaptic transmission. Pre-synaptic GABA receptor inhibits neurotransmitter release by down-regulating high-voltage activated calcium channels, whereas postsynaptic GABA receptor decreases neuronal excitability by activating a prominent inwardly rectifying potassium (Kir) conductance that underlies the late inhibitory postsynaptic potentials. Not only implicated in synaptic inhibition but also in hippocampal long-term potentiation, slow wave sleep, muscle relaxation and antinociception. Interacts with KCTD8, KCTD12 and KCTD16; this interaction determines the pharmacology and kinetics of the receptor response, the KCTD proteins markedly accelerating the GABA-B response, although to different extents. This is Gamma-aminobutyric acid type B receptor subunit 2 (Gabbr2) from Mus musculus (Mouse).